A 287-amino-acid polypeptide reads, in one-letter code: MSTLPKTLTLDTSTSRANPTPQPMKRLTVPRIRQRKGGEPIVMLTAYTVRMAQLLDPHCDMLLVGDSLAQVIYGLPHTVGVTMEMMALHGAAVVRGSYHAAVIVDMPFGSYEGSPQQAFDNAARLLKETGAAAVKVEGGKVLAPTIEFLTQRGIPVMGHVGLTPQAVNILGGYGVRGKSEEEARSIVEDAVAVAQAGAFSIVIEGVLESIAIEITNKVACPTIGIGASAQCDGQVLVTDDMLGMFERVPKFVKRYRDMAGVVSGAVQDYADEVRSRSFPTEDQIYAG.

Residues 1–19 (MSTLPKTLTLDTSTSRANP) are compositionally biased toward polar residues. The interval 1 to 24 (MSTLPKTLTLDTSTSRANPTPQPM) is disordered. The Mg(2+) site is built by Asp-66 and Asp-105. Residues 66 to 67 (DS), Asp-105, and Lys-135 each bind 3-methyl-2-oxobutanoate. Glu-137 contributes to the Mg(2+) binding site. Glu-204 functions as the Proton acceptor in the catalytic mechanism.

This sequence belongs to the PanB family. As to quaternary structure, homodecamer; pentamer of dimers. The cofactor is Mg(2+).

The protein localises to the cytoplasm. The enzyme catalyses 3-methyl-2-oxobutanoate + (6R)-5,10-methylene-5,6,7,8-tetrahydrofolate + H2O = 2-dehydropantoate + (6S)-5,6,7,8-tetrahydrofolate. It participates in cofactor biosynthesis; (R)-pantothenate biosynthesis; (R)-pantoate from 3-methyl-2-oxobutanoate: step 1/2. Its function is as follows. Catalyzes the reversible reaction in which hydroxymethyl group from 5,10-methylenetetrahydrofolate is transferred onto alpha-ketoisovalerate to form ketopantoate. This chain is 3-methyl-2-oxobutanoate hydroxymethyltransferase, found in Sphingopyxis alaskensis (strain DSM 13593 / LMG 18877 / RB2256) (Sphingomonas alaskensis).